Consider the following 409-residue polypeptide: Na(+)/H(+) antiporter NhaA (409 aa).

11 consecutive transmembrane segments (helical) span residues 13–33 (SGGI…NTFL), 58–78 (LILW…GLEL), 93–113 (IALP…IFYL), 120–140 (FALG…LGIL), 153–173 (IFLM…IALF), 176–196 (SELS…LFAL), 216–236 (VAVL…AFFI), 256–276 (LHGW…AGIS), 279–299 (GVGL…GLFV), 326–346 (FIQL…SLFI), and 363–383 (LAIL…LKFS).

This sequence belongs to the NhaA Na(+)/H(+) (TC 2.A.33) antiporter family.

It is found in the cell inner membrane. It carries out the reaction Na(+)(in) + 2 H(+)(out) = Na(+)(out) + 2 H(+)(in). Na(+)/H(+) antiporter that extrudes sodium in exchange for external protons. This chain is Na(+)/H(+) antiporter NhaA, found in Campylobacter concisus (strain 13826).